Reading from the N-terminus, the 625-residue chain is Glucokinase regulatory protein (625 aa).

SIS domains are found at residues Val-90–Ala-286 and Val-320–Lys-499. Beta-D-fructose 1-phosphate is bound by residues Thr-109 to Ser-110, Glu-153, and Ser-179 to Gly-181. A beta-D-fructose 6-phosphate-binding site is contributed by Thr-109–Ser-110. A beta-D-fructose 6-phosphate-binding site is contributed by Ser-179 to Gly-181. The important for interaction with GCK stretch occupies residues Ala-199–Val-200. Residue Glu-348 coordinates beta-D-fructose 1-phosphate. The tract at residues Leu-463–Phe-465 is essential for interaction with GCK. Lys-514 serves as a coordination point for beta-D-fructose 1-phosphate. Lys-514 provides a ligand contact to beta-D-fructose 6-phosphate.

It belongs to the GCKR family. Interacts (fructose 6-phosphate bound form) with GCK. In terms of tissue distribution, found in liver and pancreas. Not detected in muscle, brain, heart, thymus, intestine, uterus, adipose tissue, kidney, adrenal, lung or spleen.

Its subcellular location is the cytoplasm. It is found in the nucleus. The protein localises to the mitochondrion. Regulates glucokinase (GCK) by forming an inactive complex with this enzyme. Acts by promoting GCK recruitment to the nucleus, possibly to provide a reserve of GCK that can be quickly released in the cytoplasm after a meal. The affinity of GCKR for GCK is modulated by fructose metabolites: GCKR with bound fructose 6-phosphate has increased affinity for GCK, while GCKR with bound fructose 1-phosphate has strongly decreased affinity for GCK and does not inhibit GCK activity. This is Glucokinase regulatory protein from Homo sapiens (Human).